The chain runs to 161 residues: MHCPFCGKYDTKVTDSRLVAEGDQVRRRRQCNDCGERFTTYETAELVMPRVIKGDGSRETFDERKLRAGMLRALEKRPVSAESIEAAVERIRQRLRARGEREIEAREIGEEVMRSLKRLDQVAYIRFASVYRRFQDLDEFRAEIDRLAQEPSFSPDDADKR.

Residues 3–34 fold into a zinc finger; that stretch reads CPFCGKYDTKVTDSRLVAEGDQVRRRRQCNDC. The 91-residue stretch at 49 to 139 folds into the ATP-cone domain; sequence PRVIKGDGSR…VYRRFQDLDE (91 aa).

This sequence belongs to the NrdR family. It depends on Zn(2+) as a cofactor.

In terms of biological role, negatively regulates transcription of bacterial ribonucleotide reductase nrd genes and operons by binding to NrdR-boxes. The chain is Transcriptional repressor NrdR from Chromohalobacter salexigens (strain ATCC BAA-138 / DSM 3043 / CIP 106854 / NCIMB 13768 / 1H11).